The chain runs to 115 residues: U3-lycotoxin-Ls1n (115 aa).

The signal sequence occupies residues 1–20 (MKFVLLFGVLLVTLFSYSSA). The propeptide occupies 21 to 44 (EMLDDFDQADEDELLSLIEKEEAR). Intrachain disulfides connect Cys48–Cys63, Cys55–Cys72, Cys62–Cys87, and Cys74–Cys85.

The protein belongs to the neurotoxin 19 (CSTX) family. 01 subfamily. As to expression, expressed by the venom gland.

The protein localises to the secreted. In Lycosa singoriensis (Wolf spider), this protein is U3-lycotoxin-Ls1n.